The following is a 499-amino-acid chain: MIKRALISVFDKTGILDLAKFLESRDVEIISTGGTYKHLKENGVKVIDIEEVTGFPEMLDGRVKTLNPLIHGGILAIRDNEEHMKVIEEKGIKPIDMVVVNLYPFFNKVEEDLSFDEKVEFIDIGGPTMIRAAAKNFKDVVVLTDTKDYENVINEIKENNQVNIKTKKKLAGKVFNLMSAYDAAISNFLLEEEYPEYLTLSYKKNMDLRYGENPHQTAAYYTSTVGKYPMKNFKKLNGKELSYNNIKDMDIAWKTVCEFKEVACCALKHNTPCGVAIGDTIQEVYTKAYECDPISIFGGIVAFNRKVDKETAENLIKIFLEIVVAPDFDEDALEVLKTKKNLRVIKCEEKSTQDKDMTKVDGGILVQQSDNKLLEDTKVVTEKSPTEKEMNDLIFGMKVVKYVKSNAIVVIKDGMAKGIGGGQVNRIWAAKEALDRAGDGVVLASDAFFPFGDVAEEAAKWGIKAIIQPGGSIRDEESIKVCNEKGISMVFTGVRHFKH.

In terms of domain architecture, MGS-like spans 1–144 (MIKRALISVF…KNFKDVVVLT (144 aa)).

This sequence belongs to the PurH family.

The catalysed reaction is (6R)-10-formyltetrahydrofolate + 5-amino-1-(5-phospho-beta-D-ribosyl)imidazole-4-carboxamide = 5-formamido-1-(5-phospho-D-ribosyl)imidazole-4-carboxamide + (6S)-5,6,7,8-tetrahydrofolate. It carries out the reaction IMP + H2O = 5-formamido-1-(5-phospho-D-ribosyl)imidazole-4-carboxamide. It functions in the pathway purine metabolism; IMP biosynthesis via de novo pathway; 5-formamido-1-(5-phospho-D-ribosyl)imidazole-4-carboxamide from 5-amino-1-(5-phospho-D-ribosyl)imidazole-4-carboxamide (10-formyl THF route): step 1/1. Its pathway is purine metabolism; IMP biosynthesis via de novo pathway; IMP from 5-formamido-1-(5-phospho-D-ribosyl)imidazole-4-carboxamide: step 1/1. The chain is Bifunctional purine biosynthesis protein PurH from Clostridium botulinum (strain 657 / Type Ba4).